A 498-amino-acid chain; its full sequence is MAEEQQAHLEDLNDQMLVRREKMEALREEGIDPFGKRFDRTHNSAELHEQYDNHTKEELSEMNTEVSVAGRMMTKRGKGKAGFAHLQDREGQIQIYVRKDQVGDEAYELFKHADLGDFFGVTGQVMKTNTGEVTVKAQTITLLTKALRPLPDKYHGLTNVEQRYRQRYLDLISNKESFDRFMKRSQIISEIRRYLDGNGYVEVETPVLHNEAGGAAARPFITHHNALDMDLYLRIALELHLKRLIVGGMEKVYEIGRVFRNEGIDTTHNPEFTMLEAYTAYTDYQDVMDLTEGIIRNAAEKVLGTTDITYDGQAVDLGSPFKRLHMVDAVKEQTGVDFWQEMTIEEARALAKEHNVEITDAMTVGHIINEFFETFVEDTLQQPTFIYGHPVAVSPLAKKNPEDGRFTDRFELFIIGKEFANAFTELNDPIDQRERFEEQEKEREQGNDEAHGVDEDFIEALEYGLPPTGGLGIGIDRLVMLLTDAQSIRDVLLFPTMR.

Glu-411 and Glu-418 together coordinate Mg(2+).

The protein belongs to the class-II aminoacyl-tRNA synthetase family. Homodimer. Mg(2+) serves as cofactor.

It localises to the cytoplasm. It catalyses the reaction tRNA(Lys) + L-lysine + ATP = L-lysyl-tRNA(Lys) + AMP + diphosphate. This Enterococcus faecalis (strain ATCC 700802 / V583) protein is Lysine--tRNA ligase.